The sequence spans 167 residues: Ribosome maturation factor RimM (167 aa).

In terms of domain architecture, PRC barrel spans 94–167 (EENEYFIKDL…VMVVHLLEGL (74 aa)).

The protein belongs to the RimM family. In terms of assembly, binds ribosomal protein uS19.

The protein resides in the cytoplasm. An accessory protein needed during the final step in the assembly of 30S ribosomal subunit, possibly for assembly of the head region. Essential for efficient processing of 16S rRNA. May be needed both before and after RbfA during the maturation of 16S rRNA. It has affinity for free ribosomal 30S subunits but not for 70S ribosomes. This is Ribosome maturation factor RimM from Thermoanaerobacter pseudethanolicus (strain ATCC 33223 / 39E) (Clostridium thermohydrosulfuricum).